The primary structure comprises 102 residues: MYAIIETGGKQIKVEAGQEIYVEKLAGEVGDVVTFDKVLFVGGDSAKVGVPFVDGATVTAKVEKQGRAKKLTVYKYKPKKNYHKKQGHRQPYTKLTIDAINA.

It belongs to the bacterial ribosomal protein bL21 family. In terms of assembly, part of the 50S ribosomal subunit. Contacts protein L20.

In terms of biological role, this protein binds to 23S rRNA in the presence of protein L20. The sequence is that of Large ribosomal subunit protein bL21 from Listeria innocua serovar 6a (strain ATCC BAA-680 / CLIP 11262).